Here is a 205-residue protein sequence, read N- to C-terminus: Ribosomal RNA small subunit methyltransferase G (205 aa).

Residues Gly-66, Phe-71, Ile-119–Glu-120, and Arg-135 each bind S-adenosyl-L-methionine.

The protein belongs to the methyltransferase superfamily. RNA methyltransferase RsmG family.

It is found in the cytoplasm. The enzyme catalyses guanosine(527) in 16S rRNA + S-adenosyl-L-methionine = N(7)-methylguanosine(527) in 16S rRNA + S-adenosyl-L-homocysteine. Functionally, specifically methylates the N7 position of guanine in position 527 of 16S rRNA. The protein is Ribosomal RNA small subunit methyltransferase G of Rhizobium rhizogenes (strain K84 / ATCC BAA-868) (Agrobacterium radiobacter).